The primary structure comprises 96 residues: UPF0251 protein Shal_3723 (96 aa).

The protein belongs to the UPF0251 family.

This is UPF0251 protein Shal_3723 from Shewanella halifaxensis (strain HAW-EB4).